We begin with the raw amino-acid sequence, 306 residues long: Probable arylamine N-acetyltransferase 3 (306 aa).

Cys75 (acyl-thioester intermediate) is an active-site residue. Active-site residues include His115 and Asp130.

It belongs to the arylamine N-acetyltransferase family.

The enzyme catalyses an arylamine + acetyl-CoA = an N-acetylarylamine + CoA. The protein is Probable arylamine N-acetyltransferase 3 of Dictyostelium discoideum (Social amoeba).